A 223-amino-acid chain; its full sequence is Deoxyribose-phosphate aldolase (223 aa).

D92 (proton donor/acceptor) is an active-site residue. The Schiff-base intermediate with acetaldehyde role is filled by K158. The Proton donor/acceptor role is filled by K188.

It belongs to the DeoC/FbaB aldolase family. DeoC type 1 subfamily.

It is found in the cytoplasm. The enzyme catalyses 2-deoxy-D-ribose 5-phosphate = D-glyceraldehyde 3-phosphate + acetaldehyde. It participates in carbohydrate degradation; 2-deoxy-D-ribose 1-phosphate degradation; D-glyceraldehyde 3-phosphate and acetaldehyde from 2-deoxy-alpha-D-ribose 1-phosphate: step 2/2. Functionally, catalyzes a reversible aldol reaction between acetaldehyde and D-glyceraldehyde 3-phosphate to generate 2-deoxy-D-ribose 5-phosphate. This is Deoxyribose-phosphate aldolase from Mycobacterium avium (strain 104).